The primary structure comprises 64 residues: Large ribosomal subunit protein bL28 (64 aa).

It belongs to the bacterial ribosomal protein bL28 family.

The chain is Large ribosomal subunit protein bL28 from Campylobacter jejuni subsp. doylei (strain ATCC BAA-1458 / RM4099 / 269.97).